The primary structure comprises 60 residues: Metallothionein (60 aa).

Methionine 1 carries the N-acetylmethionine modification. The segment at 1-28 (MDPCECSKTGTCNCGGSCTCKNCSCTTC) is beta. 20 residues coordinate a divalent metal cation: cysteine 4, cysteine 6, cysteine 12, cysteine 14, cysteine 18, cysteine 20, cysteine 23, cysteine 25, cysteine 28, cysteine 32, cysteine 33, cysteine 35, cysteine 36, cysteine 40, cysteine 43, cysteine 47, cysteine 49, cysteine 54, cysteine 58, and cysteine 59. The segment at 29-60 (TKSCCPCCPSGCPKCASGCVCKGKTCDTTCCQ) is alpha.

Belongs to the metallothionein superfamily. Type 1 family.

Its function is as follows. Metallothioneins have a high content of cysteine residues that bind various heavy metals. This Pseudopleuronectes americanus (Winter flounder) protein is Metallothionein (mt).